The chain runs to 311 residues: p-hydroxybenzoic acid efflux pump subunit AaeA (311 aa).

A helical transmembrane segment spans residues 11–31 (IAITLILVLLGIIAIFKAWVF).

This sequence belongs to the membrane fusion protein (MFP) (TC 8.A.1) family.

It localises to the cell inner membrane. Its function is as follows. Forms an efflux pump with AaeB. The sequence is that of p-hydroxybenzoic acid efflux pump subunit AaeA from Serratia proteamaculans (strain 568).